The chain runs to 691 residues: Choline transporter-like 1 (691 aa).

Residues 1–10 (MGCAESKDGE) show a composition bias toward basic and acidic residues. Positions 1-20 (MGCAESKDGEGEAQNNRPKY) are disordered. Helical transmembrane passes span 28-48 (WLAI…FSFV), 205-225 (WHII…LVTM), and 232-252 (IVSW…TVAL). Residue asparagine 261 is glycosylated (N-linked (GlcNAc...) asparagine). A run of 2 helical transmembrane segments spans residues 282-302 (VLTL…VIYF) and 332-352 (LLAF…IICL). Asparagine 385 is a glycosylation site (N-linked (GlcNAc...) asparagine). The next 4 helical transmembrane spans lie at 408–428 (SMFW…FACQ), 527–547 (VVAI…NAMA), 562–582 (FILF…GIVL), and 591–611 (FYMA…HIIL).

Belongs to the CTL (choline transporter-like) family.

It localises to the membrane. The protein is Choline transporter-like 1 of Drosophila melanogaster (Fruit fly).